Reading from the N-terminus, the 144-residue chain is Subtilisin inhibitor (144 aa).

The segment covering 1–12 (MRNTGAGPSPSV) has biased composition (low complexity). Positions 1–25 (MRNTGAGPSPSVSRPPPSAAPLSGA) are disordered. An N-terminal signal peptide occupies residues 1-31 (MRNTGAGPSPSVSRPPPSAAPLSGAALAAPG). Repeats lie at residues 33 to 37 (APSAL) and 39 to 43 (APSAL). 2 disulfide bridges follow: cysteine 66/cysteine 81 and cysteine 102/cysteine 132.

The protein belongs to the protease inhibitor I16 (SSI) family. As to quaternary structure, homodimer.

Its subcellular location is the secreted. Functionally, strong inhibitor of bacterial serine proteases such as subtilisin. The protein is Subtilisin inhibitor (ssi) of Streptomyces albogriseolus.